The primary structure comprises 83 residues: Mu-theraphotoxin-Hhn2b 2 (83 aa).

A signal peptide spans 1-21 (MKASMFLALAGLVLLFVVCYA). The propeptide occupies 22 to 48 (SESEEKEFPRELISKIFTVDDFKGEER). Cystine bridges form between cysteine 50–cysteine 65, cysteine 57–cysteine 70, and cysteine 64–cysteine 77. The residue at position 81 (leucine 81) is a Leucine amide.

Belongs to the neurotoxin 10 (Hwtx-1) family. 14 (Hntx-1) subfamily. In terms of assembly, monomer. As to expression, expressed by the venom gland.

Its subcellular location is the secreted. Its function is as follows. Weakly blocks the rat SCN2A/SCN1B (Nav1.2/beta-1) sodium channel (IC(50)=68 uM) and the insect sodium channel para/tipE (IC(50)=4.3 uM), without altering the activation or inactivation kinetics (depressant toxin). In Cyriopagopus hainanus (Chinese bird spider), this protein is Mu-theraphotoxin-Hhn2b 2.